The primary structure comprises 277 residues: Large ribosomal subunit protein uL2 (277 aa).

2 disordered regions span residues 28-55 and 207-277; these read EPEK…RHRG and KAGR…RTQG. Basic residues-rich tracts occupy residues 34–43, 209–220, and 255–265; these read THHKHSKQGR, GRTRHRGQRPHV, and LGRKTRNKKKR.

Belongs to the universal ribosomal protein uL2 family. Part of the 50S ribosomal subunit. Forms a bridge to the 30S subunit in the 70S ribosome.

Functionally, one of the primary rRNA binding proteins. Required for association of the 30S and 50S subunits to form the 70S ribosome, for tRNA binding and peptide bond formation. It has been suggested to have peptidyltransferase activity; this is somewhat controversial. Makes several contacts with the 16S rRNA in the 70S ribosome. This Microcystis aeruginosa (strain NIES-843 / IAM M-2473) protein is Large ribosomal subunit protein uL2.